Consider the following 451-residue polypeptide: UDP-N-acetylmuramoylalanine--D-glutamate ligase (451 aa).

119–125 provides a ligand contact to ATP; the sequence is GSNGKTT.

Belongs to the MurCDEF family.

The protein localises to the cytoplasm. It carries out the reaction UDP-N-acetyl-alpha-D-muramoyl-L-alanine + D-glutamate + ATP = UDP-N-acetyl-alpha-D-muramoyl-L-alanyl-D-glutamate + ADP + phosphate + H(+). It participates in cell wall biogenesis; peptidoglycan biosynthesis. Functionally, cell wall formation. Catalyzes the addition of glutamate to the nucleotide precursor UDP-N-acetylmuramoyl-L-alanine (UMA). This Bacillus cytotoxicus (strain DSM 22905 / CIP 110041 / 391-98 / NVH 391-98) protein is UDP-N-acetylmuramoylalanine--D-glutamate ligase.